The following is a 360-amino-acid chain: Spermidine/putrescine-binding periplasmic protein 1 (360 aa).

The first 16 residues, 1 to 16 (MKKFAGLITASFVAAT), serve as a signal peptide directing secretion.

The protein belongs to the bacterial solute-binding protein PotD/PotF family.

The protein resides in the periplasm. Its function is as follows. Required for the activity of the bacterial periplasmic transport system of putrescine and spermidine. Polyamine binding protein. In Haemophilus influenzae (strain ATCC 51907 / DSM 11121 / KW20 / Rd), this protein is Spermidine/putrescine-binding periplasmic protein 1 (potD-B).